The sequence spans 103 residues: Zinc-containing ferredoxin (103 aa).

The tract at residues 1–36 (GIDPNYRTSKPVVGDHSGHKIYGPVESPKVLGVHGT) is N-terminal extension. H19 provides a ligand contact to Zn(2+). Residue K29 is modified to N6-methyllysine. A Zn(2+)-binding site is contributed by H34. 4Fe-4S ferredoxin-type domains follow at residues 35–65 (GTIV…WYET) and 74–103 (KADP…VKPP). C45 and C51 together coordinate [3Fe-4S] cluster. C55 provides a ligand contact to [4Fe-4S] cluster. Zn(2+) is bound at residue D76. Residues C83, C86, and C89 each coordinate [4Fe-4S] cluster. C93 provides a ligand contact to [3Fe-4S] cluster.

[3Fe-4S] cluster is required as a cofactor. The cofactor is [4Fe-4S] cluster. Requires Zn(2+) as cofactor.

In terms of biological role, ferredoxins are iron-sulfur proteins that transfer electrons in a wide variety of metabolic reactions. In Sulfolobus acidocaldarius (strain ATCC 33909 / DSM 639 / JCM 8929 / NBRC 15157 / NCIMB 11770), this protein is Zinc-containing ferredoxin (zfx).